Consider the following 298-residue polypeptide: Protease HtpX homolog (298 aa).

2 helical membrane passes run 14-34 (VVLLVVFFALLALIGASAGYL) and 39-59 (YAMGLVLALVIGVIYATSMIF). His-143 serves as a coordination point for Zn(2+). The active site involves Glu-144. A Zn(2+)-binding site is contributed by His-147. Transmembrane regions (helical) follow at residues 158-178 (IAVALASAVTVISSIGGRMLW) and 197-217 (IITLLLSLLSLLLAPLVASLI). Glu-226 provides a ligand contact to Zn(2+).

Belongs to the peptidase M48B family. It depends on Zn(2+) as a cofactor.

It is found in the cell membrane. The sequence is that of Protease HtpX homolog from Streptococcus pyogenes serotype M3 (strain SSI-1).